Here is a 463-residue protein sequence, read N- to C-terminus: Asparagine--tRNA ligase (463 aa).

Belongs to the class-II aminoacyl-tRNA synthetase family. As to quaternary structure, homodimer.

It is found in the cytoplasm. The enzyme catalyses tRNA(Asn) + L-asparagine + ATP = L-asparaginyl-tRNA(Asn) + AMP + diphosphate + H(+). This chain is Asparagine--tRNA ligase, found in Desulfitobacterium hafniense (strain Y51).